The following is an 895-amino-acid chain: Probable LRR receptor-like serine/threonine-protein kinase At5g48740 (895 aa).

Residues 1-16 form the signal peptide; that stretch reads MLFWVLLSSFCVFCFS. The Extracellular portion of the chain corresponds to 17–544; that stretch reads SPDGFLSLSC…INKKQRKQNR (528 aa). N-linked (GlcNAc...) asparagine glycosylation is found at Asn36, Asn50, Asn60, Asn140, Asn195, Asn234, and Asn318. LRR repeat units follow at residues 385-407, 408-430, 431-453, 454-477, 478-500, and 511-532; these read RVTS…GDLL, DLKT…GSLK, DLQK…EDLV, NLEV…GKLK, KLRL…LNIT, and CLSF…PQVT. Residues Asn416, Asn436, Asn462, Asn498, and Asn521 are each glycosylated (N-linked (GlcNAc...) asparagine). A helical transmembrane segment spans residues 545-565; that stretch reads IAILLGVSGGALFATFLVFVF. Residues 566-895 lie on the Cytoplasmic side of the membrane; the sequence is MSIFTRRQRN…SYLAASAHTD (330 aa). In terms of domain architecture, Protein kinase spans 606–888; sequence RNFKEVIGRG…EAYSLQLSYL (283 aa). ATP-binding positions include 612-620 and Lys634; that span reads IGRGSFGAV. Tyr679 is subject to Phosphotyrosine. The active-site Proton acceptor is Asp732. Ser736 bears the Phosphoserine mark. A phosphothreonine mark is found at Thr767 and Thr772. Tyr780 carries the phosphotyrosine modification.

Belongs to the protein kinase superfamily. Ser/Thr protein kinase family.

It is found in the membrane. It carries out the reaction L-seryl-[protein] + ATP = O-phospho-L-seryl-[protein] + ADP + H(+). The enzyme catalyses L-threonyl-[protein] + ATP = O-phospho-L-threonyl-[protein] + ADP + H(+). In Arabidopsis thaliana (Mouse-ear cress), this protein is Probable LRR receptor-like serine/threonine-protein kinase At5g48740.